The primary structure comprises 484 residues: Toluene efflux pump outer membrane protein TtgC (484 aa).

Residues 1–17 (MTKSLLSLAVTAFILGG) form the signal peptide. A lipid anchor (N-palmitoyl cysteine) is attached at Cys18. Cys18 is lipidated: S-diacylglycerol cysteine.

It belongs to the outer membrane factor (OMF) (TC 1.B.17) family.

It localises to the cell outer membrane. Its function is as follows. The outer membrane component of a constitutive organic solvent efflux system. Is involved in export of toluene, styrene, m-xylene, propylbenzene and ethylbenzene. Also exports AMP and the antibiotics carbenicillin, nalidixic acid, chloramphenicol and tetracycline. This is Toluene efflux pump outer membrane protein TtgC (ttgC) from Pseudomonas putida (strain DOT-T1E).